The sequence spans 310 residues: Transcription initiation factor IIB (310 aa).

Tandem repeats lie at residues 126-209 (REIT…VREL) and 220-301 (RYVS…ELVQ).

This sequence belongs to the TFIIB family.

In terms of biological role, stabilizes TBP binding to an archaeal box-A promoter. Also responsible for recruiting RNA polymerase II to the pre-initiation complex (DNA-TBP-TFIIB). The sequence is that of Transcription initiation factor IIB from Pyrodictium occultum.